Consider the following 360-residue polypeptide: Peptide chain release factor 1 (360 aa).

Residue Gln236 is modified to N5-methylglutamine. The segment at 288-308 is disordered; the sequence is QDEQDAERKSTIGTGDRSERI. The span at 293-308 shows a compositional bias: basic and acidic residues; that stretch reads AERKSTIGTGDRSERI.

It belongs to the prokaryotic/mitochondrial release factor family. Post-translationally, methylated by PrmC. Methylation increases the termination efficiency of RF1.

The protein resides in the cytoplasm. Its function is as follows. Peptide chain release factor 1 directs the termination of translation in response to the peptide chain termination codons UAG and UAA. The sequence is that of Peptide chain release factor 1 from Streptococcus equi subsp. zooepidemicus (strain H70).